The sequence spans 611 residues: Dihydroxy-acid dehydratase (611 aa).

Mg(2+) is bound at residue Asp-81. Cys-122 serves as a coordination point for [2Fe-2S] cluster. Residues Asp-123 and Lys-124 each contribute to the Mg(2+) site. Position 124 is an N6-carboxylysine (Lys-124). Cys-195 serves as a coordination point for [2Fe-2S] cluster. A Mg(2+)-binding site is contributed by Glu-491. Ser-517 functions as the Proton acceptor in the catalytic mechanism.

Belongs to the IlvD/Edd family. In terms of assembly, homodimer. Requires [2Fe-2S] cluster as cofactor. Mg(2+) is required as a cofactor.

It catalyses the reaction (2R)-2,3-dihydroxy-3-methylbutanoate = 3-methyl-2-oxobutanoate + H2O. The enzyme catalyses (2R,3R)-2,3-dihydroxy-3-methylpentanoate = (S)-3-methyl-2-oxopentanoate + H2O. Its pathway is amino-acid biosynthesis; L-isoleucine biosynthesis; L-isoleucine from 2-oxobutanoate: step 3/4. The protein operates within amino-acid biosynthesis; L-valine biosynthesis; L-valine from pyruvate: step 3/4. Functions in the biosynthesis of branched-chain amino acids. Catalyzes the dehydration of (2R,3R)-2,3-dihydroxy-3-methylpentanoate (2,3-dihydroxy-3-methylvalerate) into 2-oxo-3-methylpentanoate (2-oxo-3-methylvalerate) and of (2R)-2,3-dihydroxy-3-methylbutanoate (2,3-dihydroxyisovalerate) into 2-oxo-3-methylbutanoate (2-oxoisovalerate), the penultimate precursor to L-isoleucine and L-valine, respectively. The protein is Dihydroxy-acid dehydratase of Brucella abortus (strain S19).